Consider the following 90-residue polypeptide: Probable Fe(2+)-trafficking protein (90 aa).

This sequence belongs to the Fe(2+)-trafficking protein family.

Functionally, could be a mediator in iron transactions between iron acquisition and iron-requiring processes, such as synthesis and/or repair of Fe-S clusters in biosynthetic enzymes. The chain is Probable Fe(2+)-trafficking protein from Aliivibrio salmonicida (strain LFI1238) (Vibrio salmonicida (strain LFI1238)).